A 148-amino-acid chain; its full sequence is MRYRKGARDTAFLVLYRWDLRGENPGELFKEVVEEKNIKNKDAYEYAKKLVDTAVRHIEEIDSIIEKHLKGWSIDRLGYVERNALRLGVAELIFLKSKEPGRVFIDIVDLVKKYADEKAGKFVNGVLSAIYKAYITSSKEEKPSLKSE.

The protein belongs to the NusB family.

Its function is as follows. Involved in transcription antitermination. Required for transcription of ribosomal RNA (rRNA) genes. Binds specifically to the boxA antiterminator sequence of the ribosomal RNA (rrn) operons. This Aquifex aeolicus (strain VF5) protein is Transcription antitermination protein NusB.